The chain runs to 376 residues: MSKTLTLAKKLVSIDSITPQDKGCQSIMISHLNDLNFEITDLKFGEVDNFWAIRGQQSPVFVFAGHTDVVPVGNESEWHMPPFSAQVKNGMLYGRGTSDMKGSLAAMLSATDRFVKDHSNHKGSIGYLITSDEEGPAINGTVKVAQYLKKINQTVDYCLVGEPSATHELGDIIKNGRRGSLNGSFKIIGKQGHIAYPHLASNPIHLVIPALNDLCNEVWDEGNEYFPATSFQISNIQSGTGVTNVIPGESNIVFNFRYSTQCTQEQLQSRVCAILDKRNFEYQITWEHSGYPFLTPKGKLVNACVNAIKTVKNINTQLSTSGGTSDGRFIAPILKTRVIELGPSNATIHQVNECVSIQDLEDLSDIYYHILKNILT.

A Zn(2+)-binding site is contributed by His-66. Residue Asp-68 is part of the active site. Residue Asp-99 coordinates Zn(2+). Residue Glu-133 is the Proton acceptor of the active site. 3 residues coordinate Zn(2+): Glu-134, Glu-162, and His-349.

This sequence belongs to the peptidase M20A family. DapE subfamily. Homodimer. Requires Zn(2+) as cofactor. Co(2+) is required as a cofactor.

The enzyme catalyses N-succinyl-(2S,6S)-2,6-diaminopimelate + H2O = (2S,6S)-2,6-diaminopimelate + succinate. Its pathway is amino-acid biosynthesis; L-lysine biosynthesis via DAP pathway; LL-2,6-diaminopimelate from (S)-tetrahydrodipicolinate (succinylase route): step 3/3. In terms of biological role, catalyzes the hydrolysis of N-succinyl-L,L-diaminopimelic acid (SDAP), forming succinate and LL-2,6-diaminopimelate (DAP), an intermediate involved in the bacterial biosynthesis of lysine and meso-diaminopimelic acid, an essential component of bacterial cell walls. The chain is Succinyl-diaminopimelate desuccinylase from Vesicomyosocius okutanii subsp. Calyptogena okutanii (strain HA).